The following is a 279-amino-acid chain: L-ascorbate peroxidase 5, peroxisomal (279 aa).

The Proton acceptor role is filled by His-39. Residues 111–134 (PFTPGRKDADSADDGELPNPNEGA) form a disordered region. His-158 is a binding site for heme b. Positions 159, 175, and 182 each coordinate K(+). The chain crosses the membrane as a helical span at residues 251-271 (AVTQQTLGIAVAAAVVIFTIC). The AKR2A-binding sequence (ABS) required for peroxisome membrane targeting motif lies at 272 to 279 (YEASRRGK).

Belongs to the peroxidase family. Ascorbate peroxidase subfamily. As to quaternary structure, interacts with AKR2A and AKR2B. The cofactor is heme b.

Its subcellular location is the peroxisome membrane. The enzyme catalyses L-ascorbate + H2O2 = L-dehydroascorbate + 2 H2O. Functionally, plays a key role in hydrogen peroxide removal. This chain is L-ascorbate peroxidase 5, peroxisomal (APX5), found in Arabidopsis thaliana (Mouse-ear cress).